The primary structure comprises 259 residues: Phosphoribosylaminoimidazole-succinocarboxamide synthase (259 aa).

This sequence belongs to the SAICAR synthetase family.

The enzyme catalyses 5-amino-1-(5-phospho-D-ribosyl)imidazole-4-carboxylate + L-aspartate + ATP = (2S)-2-[5-amino-1-(5-phospho-beta-D-ribosyl)imidazole-4-carboxamido]succinate + ADP + phosphate + 2 H(+). Its pathway is purine metabolism; IMP biosynthesis via de novo pathway; 5-amino-1-(5-phospho-D-ribosyl)imidazole-4-carboxamide from 5-amino-1-(5-phospho-D-ribosyl)imidazole-4-carboxylate: step 1/2. This chain is Phosphoribosylaminoimidazole-succinocarboxamide synthase, found in Hyphomonas neptunium (strain ATCC 15444).